Reading from the N-terminus, the 157-residue chain is ATP synthase subunit b 1 (157 aa).

Residues 7-29 form a helical membrane-spanning segment; sequence LFGQMVTFALLVWFTMKYVWPPL.

It belongs to the ATPase B chain family. F-type ATPases have 2 components, F(1) - the catalytic core - and F(0) - the membrane proton channel. F(1) has five subunits: alpha(3), beta(3), gamma(1), delta(1), epsilon(1). F(0) has three main subunits: a(1), b(2) and c(10-14). The alpha and beta chains form an alternating ring which encloses part of the gamma chain. F(1) is attached to F(0) by a central stalk formed by the gamma and epsilon chains, while a peripheral stalk is formed by the delta and b chains.

It localises to the cell inner membrane. Its function is as follows. F(1)F(0) ATP synthase produces ATP from ADP in the presence of a proton or sodium gradient. F-type ATPases consist of two structural domains, F(1) containing the extramembraneous catalytic core and F(0) containing the membrane proton channel, linked together by a central stalk and a peripheral stalk. During catalysis, ATP synthesis in the catalytic domain of F(1) is coupled via a rotary mechanism of the central stalk subunits to proton translocation. Component of the F(0) channel, it forms part of the peripheral stalk, linking F(1) to F(0). This chain is ATP synthase subunit b 1, found in Methylococcus capsulatus (strain ATCC 33009 / NCIMB 11132 / Bath).